The following is a 349-amino-acid chain: Hepatic sodium/bile acid cotransporter (349 aa).

Residues 1 to 22 (MEAHNASAPFNFTLPPNFGKRP) are Extracellular-facing. Asn5 and Asn11 each carry an N-linked (GlcNAc...) asparagine glycan. A helical transmembrane segment spans residues 23–44 (TDLALSVILVFMLFFIMLSLGC). Residues 45 to 47 (TME) lie on the Cytoplasmic side of the membrane. The helical transmembrane segment at 48-83 (FSKIKAHLWKPKGLAIALVAQYGIMPLTAFVLGKVF) threads the bilayer. Topologically, residues 84–86 (RLK) are extracellular. A discontinuously helical transmembrane segment spans residues 87–112 (NIEALAILVCGCSPGGNLSNVFSLAM). The Cytoplasmic portion of the chain corresponds to 113–115 (KGD). Residues 116–142 (MNLSIVMTTCSTFCALGMMPLLLYIYS) form a helical membrane-spanning segment. The Extracellular segment spans residues 143-156 (RGIYDGDLKDKVPY). A helical membrane pass occupies residues 157–179 (KGIVISLVLVLIPCTIGIVLKSK). Residues 180 to 183 (RPQY) lie on the Cytoplasmic side of the membrane. A helical membrane pass occupies residues 184–217 (MRYVIKGGMIIILLCSVAVTVLSAINVGKSIMFA). Residues 218–219 (MT) are Extracellular-facing. The chain crosses the membrane as a helical span at residues 220 to 243 (PLLIATSSLMPFIGFLLGYVLSAL). Over 244 to 247 (FCLN) the chain is Cytoplasmic. Residues 248-273 (GRCRRTVSMETGCQNVQLCSTILNVA) form a discontinuously helical membrane-spanning segment. Topologically, residues 274–280 (FPPEVIG) are extracellular. Residues 281 to 311 (PLFFFPLLYMIFQLGEGLLLIAIFWCYEKFK) form a helical membrane-spanning segment. At 312-349 (TPKDKTKMIYTAATTEETIPGALGNGTYKGEDCSPCTA) the chain is on the cytoplasmic side.

This sequence belongs to the bile acid:sodium symporter (BASS) (TC 2.A.28) family. In terms of assembly, (Microbial infection) Interacts with the myristoylated pre-S1 domain of hepatitis B virus large envelope protein; myristoylation is essential for this interaction. As to expression, expressed in liver. Expressed in placental trophoblasts.

Its subcellular location is the cell membrane. The catalysed reaction is taurocholate(out) + 2 Na(+)(out) = taurocholate(in) + 2 Na(+)(in). The enzyme catalyses cholate(out) + 2 Na(+)(out) = cholate(in) + 2 Na(+)(in). It catalyses the reaction estrone 3-sulfate(out) + 2 Na(+)(out) = estrone 3-sulfate(in) + 2 Na(+)(in). It carries out the reaction taurochenodeoxycholate(out) + 2 Na(+)(out) = taurochenodeoxycholate(in) + 2 Na(+)(in). The catalysed reaction is tauroursodeoxycholate(out) + 2 Na(+)(out) = tauroursodeoxycholate(in) + 2 Na(+)(in). The enzyme catalyses glycocholate(out) + 2 Na(+)(out) = glycocholate(in) + 2 Na(+)(in). It catalyses the reaction tauronorcholate(out) + 2 Na(+)(out) = tauronorcholate(in) + 2 Na(+)(in). It carries out the reaction taurodeoxycholate(out) + 2 Na(+)(out) = taurodeoxycholate(in) + 2 Na(+)(in). The catalysed reaction is tauroallocholate(out) + 2 Na(+)(out) = tauroallocholate(in) + 2 Na(+)(in). The enzyme catalyses taurohyodeoxycholate(out) + 2 Na(+)(out) = taurohyodeoxycholate(in) + 2 Na(+)(in). It catalyses the reaction taurohyocholate(out) + 2 Na(+)(out) = taurohyocholate(in) + 2 Na(+)(in). It carries out the reaction tauro-beta-muricholate(out) + 2 Na(+)(out) = tauro-beta-muricholate(in) + 2 Na(+)(in). With respect to regulation, the transport of bile acids is sodium-dependent. Its function is as follows. As a major transporter of conjugated bile salts from plasma into the hepatocyte, it plays a key role in the enterohepatic circulation of bile salts necessary for the solubilization and absorption of dietary fat and fat-soluble vitamins. It is strictly dependent on the extracellular presence of sodium. It exhibits broad substrate specificity and transports various bile acids, such as taurocholate, cholate, as well as non-bile acid organic compounds, such as estrone sulfate. Works collaboratively with the ileal transporter (NTCP2), the organic solute transporter (OST), and the bile salt export pump (BSEP), to ensure efficacious biological recycling of bile acids during enterohepatic circulation. Functionally, (Microbial infection) Acts as an entry receptor for hepatitis B virus (HBV). The recognition for human SLC10A1/NTCP is highly specific. This Homo sapiens (Human) protein is Hepatic sodium/bile acid cotransporter (SLC10A1).